The sequence spans 487 residues: Pentatricopeptide repeat-containing protein At5g61370, mitochondrial (487 aa).

The N-terminal 90 residues, M1–F90, are a transit peptide targeting the mitochondrion. PPR repeat units follow at residues D137–Q171, D172–V202, E207–P241, D242–P283, T284–P318, D319–P353, E354–G388, and Y389–L423. A disordered region spans residues T466–H487.

This sequence belongs to the PPR family. P subfamily.

Its subcellular location is the mitochondrion. The polypeptide is Pentatricopeptide repeat-containing protein At5g61370, mitochondrial (Arabidopsis thaliana (Mouse-ear cress)).